A 358-amino-acid chain; its full sequence is Src kinase-associated phosphoprotein 2 (358 aa).

Ser5 and Ser6 each carry phosphoserine. Residues 62 to 88 (ESQDKGDAEDGEEYDDPFAGPPDTISL) are disordered. Phosphotyrosine is present on Tyr75. Ser87 and Ser90 each carry phosphoserine. Positions 116–219 (FVLKAGYLEK…WVQQLNFVLQ (104 aa)) constitute a PH domain. Tyr151 and Tyr197 each carry phosphotyrosine. The residue at position 223 (Ser223) is a Phosphoserine. The interval 232 to 254 (ERGELYDDVDHPLPSSSPTRSLP) is disordered. Over residues 243 to 253 (PLPSSSPTRSL) the composition is skewed to low complexity. Position 260 is a phosphotyrosine (Tyr260). Phosphoserine is present on residues Ser282 and Ser285. Positions 296–357 (NYANFYQGLW…PKAYVMEMYD (62 aa)) constitute an SH3 domain.

It belongs to the SKAP family. As to quaternary structure, interacts with FYB1, which is required for SKAP2 protein stability. Interacts with PTPNS1. Part of a complex consisting of SKAP2, FYB1 and PTPNS1. Part of a complex consisting of SKAP2, FYB1 and LILRB3. Interacts with LAT, GRB2, PTK2B and PRAM1. May interact with actin. May interact with FYN, HCK and LYN. Interacts with FASLG.

Its subcellular location is the cytoplasm. In terms of biological role, may be involved in B-cell and macrophage adhesion processes. In B-cells, may act by coupling the B-cell receptor (BCR) to integrin activation. May play a role in src signaling pathway. This is Src kinase-associated phosphoprotein 2 (SKAP2) from Bos taurus (Bovine).